Here is a 906-residue protein sequence, read N- to C-terminus: Probable RNA-directed DNA polymerase from transposon BS (906 aa).

Positions 482-758 constitute a Reverse transcriptase domain; the sequence is AILRVQFFPK…SQAKYLGITL (277 aa).

It depends on Mg(2+) as a cofactor. Mn(2+) is required as a cofactor.

It carries out the reaction DNA(n) + a 2'-deoxyribonucleoside 5'-triphosphate = DNA(n+1) + diphosphate. The chain is Probable RNA-directed DNA polymerase from transposon BS from Drosophila melanogaster (Fruit fly).